The chain runs to 259 residues: MEHALIELDWADIGWMLGLLGAAIALLQWQGLNLTGQLLWAGGRTILQLIVVGYFLAVVFSLDNPWAVLLVLAIMLTIAAVVARNRINPRSKSLFGWLWLSLGASTAISLGYALVVIIQPPQWYSPQYLIPLTGMILGQTMNSASLAGERLASAIQQNPREIETHLCLGATPGQAIASYRRAAIRASLIPTVNQMMVVGLVSLPGMLTGQVLAGGDPLNASVYQILIMFLILLTNTLSTIAVTATVYRQYFNQHQQLLV.

Transmembrane regions (helical) follow at residues 4 to 24 (ALIE…GAAI), 34 to 54 (LTGQ…VVGY), 55 to 75 (FLAV…LAIM), 98 to 118 (LWLS…VVII), 128 to 148 (YLIP…SLAG), 195 to 215 (MMVV…LAGG), and 225 to 245 (ILIM…VTAT).

This sequence belongs to the UPF0014 family.

The protein localises to the cell membrane. The chain is UPF0014 membrane protein slr1647 from Synechocystis sp. (strain ATCC 27184 / PCC 6803 / Kazusa).